We begin with the raw amino-acid sequence, 443 residues long: Serine--tRNA ligase (443 aa).

250-252 (TSE) provides a ligand contact to L-serine. Residue 281–283 (RSE) coordinates ATP. Glutamate 304 is a binding site for L-serine. Residue 368-371 (EISS) participates in ATP binding. Serine 403 lines the L-serine pocket.

This sequence belongs to the class-II aminoacyl-tRNA synthetase family. Type-1 seryl-tRNA synthetase subfamily. Homodimer. The tRNA molecule binds across the dimer.

It localises to the cytoplasm. The catalysed reaction is tRNA(Ser) + L-serine + ATP = L-seryl-tRNA(Ser) + AMP + diphosphate + H(+). It carries out the reaction tRNA(Sec) + L-serine + ATP = L-seryl-tRNA(Sec) + AMP + diphosphate + H(+). It participates in aminoacyl-tRNA biosynthesis; selenocysteinyl-tRNA(Sec) biosynthesis; L-seryl-tRNA(Sec) from L-serine and tRNA(Sec): step 1/1. Catalyzes the attachment of serine to tRNA(Ser). Is also able to aminoacylate tRNA(Sec) with serine, to form the misacylated tRNA L-seryl-tRNA(Sec), which will be further converted into selenocysteinyl-tRNA(Sec). In Variovorax paradoxus (strain S110), this protein is Serine--tRNA ligase.